A 327-amino-acid polypeptide reads, in one-letter code: Phosphoenolpyruvate transferase (327 aa).

Aspartate 59 lines the 7,8-didemethyl-8-hydroxy-5-deazariboflavin pocket.

It belongs to the CofD family. In terms of assembly, homodimer. The cofactor is Mg(2+).

The catalysed reaction is enolpyruvoyl-2-diphospho-5'-guanosine + 7,8-didemethyl-8-hydroxy-5-deazariboflavin = dehydro coenzyme F420-0 + GMP + H(+). The protein operates within cofactor biosynthesis; coenzyme F420 biosynthesis. Catalyzes the transfer of the phosphoenolpyruvate moiety from enoylpyruvoyl-2-diphospho-5'-guanosine (EPPG) to 7,8-didemethyl-8-hydroxy-5-deazariboflavin (FO) with the formation of dehydro coenzyme F420-0 and GMP. The polypeptide is Phosphoenolpyruvate transferase (Mycolicibacterium smegmatis (strain ATCC 700084 / mc(2)155) (Mycobacterium smegmatis)).